The chain runs to 555 residues: Urocanate hydratase (555 aa).

NAD(+) is bound by residues 52-53 (GG), glutamine 130, 176-178 (GMG), glutamate 196, arginine 201, 242-243 (NA), 263-267 (QTSAH), 273-274 (YL), and tyrosine 322. Residue cysteine 410 is part of the active site. Residue glycine 492 coordinates NAD(+).

This sequence belongs to the urocanase family. It depends on NAD(+) as a cofactor.

It localises to the cytoplasm. The catalysed reaction is 4-imidazolone-5-propanoate = trans-urocanate + H2O. It participates in amino-acid degradation; L-histidine degradation into L-glutamate; N-formimidoyl-L-glutamate from L-histidine: step 2/3. Functionally, catalyzes the conversion of urocanate to 4-imidazolone-5-propionate. The protein is Urocanate hydratase of Shewanella baltica (strain OS155 / ATCC BAA-1091).